Reading from the N-terminus, the 874-residue chain is MGLPTLEFSDSYLDSPDFRERLQCHEIELERTNKFIKELIKDGSLLIGALRNLSMAVQKFSQSLQDFQFECIGDAETDDEISIAQSLKEFARLLIAVEEERRRLIQNANDVLIAPLEKFRKEQIGAAKDGKKKFDKESEKYYSILEKHLNLSAKKKESHLQEADTQIDREHQNFYEASLEYVFKIQEVQEKKKFEFVEPLLSFLQGLFTFYHEGYELAQEFAPYKQQLQFNLQNTRNNFESTRQEVERLMQRMKSANQDYRPPSQWTMEGYLYVQEKRPLGFTWIKHYCTYDKGSKTFTMSVSEMKSSGKMNGLVTSSPEMFKLKSCIRRKTDSIDKRFCFDIEVVERHGIITLQAFSEANRKLWLEAMDGKEPIYTLPAIISKKEEMYLNEAGFNFVRKCIQAVETRGITILGLYRIGGVNSKVQKLMNTTFSPKSPPDIDIDIELWDNKTITSGLKNYLRCLAEPLMTYKLHKDFIIAVKSDDQNYRVEAVHALVHKLPEKNREMLDILIKHLVKVSLHSQQNLMTVSNLGVIFGPTLMRAQEETVAAMMNIKFQNIVVEILIEHYEKIFHTAPDPSIPLPQPQSRSGSRRTRAICLSTGSRKPRGRYTPCLAEPDSDSYSSSPDSTPMGSIESLSSHSSEQNSTTKSASCQPREKSGGIPWIATPSSSNGQKSLGLWTTSPESSSREDATKTDAESDCQSVASVTSPGDVSPPIDLVKKEPYGLSGLKRASASSLRSISAAEGNKSYSGSIQSLTSVGSKETPKASPNPDLPPKMCRRLRLDTASSNGYQRPGSVVAAKAQLFENVGSPKPVSSGRQAKAMYSCKAEHSHELSFPQGAIFSNVYPSVEPGWLKATYEGKTGLVPENYVVFL.

Residues 7–262 enclose the BAR domain; sequence EFSDSYLDSP…MKSANQDYRP (256 aa). A coiled-coil region spans residues 225 to 261; it reads KQQLQFNLQNTRNNFESTRQEVERLMQRMKSANQDYR. The PH domain occupies 265-374; it reads QWTMEGYLYV…WLEAMDGKEP (110 aa). Residue Tyr376 is modified to Phosphotyrosine. Positions 376–572 constitute a Rho-GAP domain; the sequence is YTLPAIISKK…ILIEHYEKIF (197 aa). A disordered region spans residues 575-720; that stretch reads APDPSIPLPQ…GDVSPPIDLV (146 aa). The span at 620 to 650 shows a compositional bias: low complexity; sequence DSYSSSPDSTPMGSIESLSSHSSEQNSTTKS. A compositionally biased stretch (polar residues) spans 667–686; that stretch reads TPSSSNGQKSLGLWTTSPES. The residue at position 683 (Ser683) is a Phosphoserine. Basic and acidic residues predominate over residues 687–697; sequence SSREDATKTDA. Positions 700-711 are enriched in polar residues; that stretch reads DCQSVASVTSPG. Ser740, Ser753, Ser756, and Ser811 each carry phosphoserine. Positions 749–762 are enriched in polar residues; sequence SYSGSIQSLTSVGS. The tract at residues 749 to 777 is disordered; the sequence is SYSGSIQSLTSVGSKETPKASPNPDLPPK. In terms of domain architecture, SH3 spans 816–874; that stretch reads SSGRQAKAMYSCKAEHSHELSFPQGAIFSNVYPSVEPGWLKATYEGKTGLVPENYVVFL. Tyr870 is subject to Phosphotyrosine.

As to expression, highly and selectively expressed in smooth muscle cells.

Functionally, may influence blood pressure by functioning as a GTPase-activating protein for RHOA in vascular smooth muscle. The chain is Rho GTPase-activating protein 42 from Homo sapiens (Human).